The chain runs to 394 residues: Nicotinate phosphoribosyltransferase (394 aa).

His218 is modified (phosphohistidine; by autocatalysis).

Belongs to the NAPRTase family. Transiently phosphorylated on a His residue during the reaction cycle. Phosphorylation strongly increases the affinity for substrates and increases the rate of nicotinate D-ribonucleotide production. Dephosphorylation regenerates the low-affinity form of the enzyme, leading to product release.

It catalyses the reaction nicotinate + 5-phospho-alpha-D-ribose 1-diphosphate + ATP + H2O = nicotinate beta-D-ribonucleotide + ADP + phosphate + diphosphate. Its pathway is cofactor biosynthesis; NAD(+) biosynthesis; nicotinate D-ribonucleotide from nicotinate: step 1/1. Functionally, catalyzes the synthesis of beta-nicotinate D-ribonucleotide from nicotinate and 5-phospho-D-ribose 1-phosphate at the expense of ATP. The protein is Nicotinate phosphoribosyltransferase of Xylella fastidiosa (strain 9a5c).